The following is a 324-amino-acid chain: tRNA-modifying protein YgfZ (324 aa).

Residue Trp184 coordinates folate.

Belongs to the tRNA-modifying YgfZ family.

The protein resides in the cytoplasm. Functionally, folate-binding protein involved in regulating the level of ATP-DnaA and in the modification of some tRNAs. It is probably a key factor in regulatory networks that act via tRNA modification, such as initiation of chromosomal replication. This Vibrio vulnificus (strain CMCP6) protein is tRNA-modifying protein YgfZ.